The primary structure comprises 148 residues: uncharacterized protein (148 aa).

The HTH asnC-type domain maps to 3–64 (LDALDRKILE…KLNYESIGYD (62 aa)). A DNA-binding region (H-T-H motif) is located at residues 22–41 (YREIAKDLNVAVGTIYNRIK).

This is an uncharacterized protein from Pyrococcus horikoshii (strain ATCC 700860 / DSM 12428 / JCM 9974 / NBRC 100139 / OT-3).